The primary structure comprises 698 residues: Probable xyloglucan glycosyltransferase 2 (698 aa).

2 helical membrane-spanning segments follow: residues 124 to 144 (GFLA…WNGW) and 190 to 210 (ILLF…CFWI). Residue D272 is part of the active site. Residues D331 and D333 each coordinate substrate. The active site involves D425. The next 4 helical transmembrane spans lie at 503-523 (LILP…TMFV), 528-548 (LPVW…ILPS), 653-668 (LALS…RSLL), and 673-693 (IHFY…LDLI).

Belongs to the glycosyltransferase 2 family. Plant cellulose synthase-like C subfamily.

The protein localises to the golgi apparatus membrane. Its function is as follows. Probable beta-1,4-glucan synthase rather involved in the synthesis of the xyloglucan backbone than cellulose. Seems to work simultaneously with xyloglucan 6-xylosyltransferase. Xyloglucan is a noncellulosic polysaccharides of plant cell wall and consists of a glucan backbone substituted by xylose, galactose and fucose. The chain is Probable xyloglucan glycosyltransferase 2 (CSLC2) from Oryza sativa subsp. indica (Rice).